The primary structure comprises 244 residues: Leucyl/phenylalanyl-tRNA--protein transferase (244 aa).

The protein belongs to the L/F-transferase family.

The protein localises to the cytoplasm. The enzyme catalyses N-terminal L-lysyl-[protein] + L-leucyl-tRNA(Leu) = N-terminal L-leucyl-L-lysyl-[protein] + tRNA(Leu) + H(+). It catalyses the reaction N-terminal L-arginyl-[protein] + L-leucyl-tRNA(Leu) = N-terminal L-leucyl-L-arginyl-[protein] + tRNA(Leu) + H(+). The catalysed reaction is L-phenylalanyl-tRNA(Phe) + an N-terminal L-alpha-aminoacyl-[protein] = an N-terminal L-phenylalanyl-L-alpha-aminoacyl-[protein] + tRNA(Phe). Functionally, functions in the N-end rule pathway of protein degradation where it conjugates Leu, Phe and, less efficiently, Met from aminoacyl-tRNAs to the N-termini of proteins containing an N-terminal arginine or lysine. In Janthinobacterium sp. (strain Marseille) (Minibacterium massiliensis), this protein is Leucyl/phenylalanyl-tRNA--protein transferase.